Reading from the N-terminus, the 144-residue chain is ATP synthase epsilon chain (144 aa).

The protein belongs to the ATPase epsilon chain family. As to quaternary structure, F-type ATPases have 2 components, CF(1) - the catalytic core - and CF(0) - the membrane proton channel. CF(1) has five subunits: alpha(3), beta(3), gamma(1), delta(1), epsilon(1). CF(0) has three main subunits: a, b and c.

The protein localises to the cell inner membrane. Produces ATP from ADP in the presence of a proton gradient across the membrane. This is ATP synthase epsilon chain from Hydrogenovibrio crunogenus (strain DSM 25203 / XCL-2) (Thiomicrospira crunogena).